The sequence spans 158 residues: Ribosomal RNA large subunit methyltransferase H (158 aa).

Residues L74, G105, and 124-129 contribute to the S-adenosyl-L-methionine site; that span reads LGPLTL.

The protein belongs to the RNA methyltransferase RlmH family. In terms of assembly, homodimer.

The protein localises to the cytoplasm. The catalysed reaction is pseudouridine(1915) in 23S rRNA + S-adenosyl-L-methionine = N(3)-methylpseudouridine(1915) in 23S rRNA + S-adenosyl-L-homocysteine + H(+). In terms of biological role, specifically methylates the pseudouridine at position 1915 (m3Psi1915) in 23S rRNA. This is Ribosomal RNA large subunit methyltransferase H from Xylella fastidiosa (strain Temecula1 / ATCC 700964).